The sequence spans 117 residues: Large ribosomal subunit protein bL19 (117 aa).

This sequence belongs to the bacterial ribosomal protein bL19 family.

In terms of biological role, this protein is located at the 30S-50S ribosomal subunit interface and may play a role in the structure and function of the aminoacyl-tRNA binding site. The sequence is that of Large ribosomal subunit protein bL19 from Halorhodospira halophila (strain DSM 244 / SL1) (Ectothiorhodospira halophila (strain DSM 244 / SL1)).